The sequence spans 399 residues: Argininosuccinate synthase (399 aa).

8–16 is an ATP binding site; the sequence is AYSGGLDTS. The L-citrulline site is built by Tyr87 and Ser92. Gly117 contacts ATP. L-aspartate-binding residues include Thr119, Asn123, and Asp124. An L-citrulline-binding site is contributed by Asn123. Residues Arg127, Ser176, Ser185, Glu261, and Tyr273 each coordinate L-citrulline.

The protein belongs to the argininosuccinate synthase family. Type 1 subfamily. In terms of assembly, homotetramer.

It localises to the cytoplasm. The enzyme catalyses L-citrulline + L-aspartate + ATP = 2-(N(omega)-L-arginino)succinate + AMP + diphosphate + H(+). The protein operates within amino-acid biosynthesis; L-arginine biosynthesis; L-arginine from L-ornithine and carbamoyl phosphate: step 2/3. This chain is Argininosuccinate synthase, found in Clostridioides difficile (strain 630) (Peptoclostridium difficile).